Consider the following 360-residue polypeptide: MSKYNFCAGPAMLPPAVMKKAQQEFIDWQGLGVSVMEMSHRSKEFLALTKKCEASLRRLMNISDEFEVLFMHGGGRGQFSAVPLNLHQENKSAVYCENGVWSKSATDEANKFTQTTAIDVRNDTDGQFSIKAVADWQLPADASYIHYCPNETVDGLEIFDVPSHPTAPIIADMSSTILSREIDVNQFDLIYAGAQKNIGPSGIAIVIVRKTLLAREGLPKPGILDYALEAKQGSMFNTPPTFAWYLAAEVFQWLEQNGGVKAMEAQNIAKAELLYNFIDNSDFYSNKVAKHSRSRMNVPFWLNDESLNSKFVAQSNEAGLLALEGHRIVGGMRASIYNAMPLEGVQALVDFMAAFAKENS.

R41 lines the L-glutamate pocket. Residues 75–76, W101, T152, D172, and Q195 contribute to the pyridoxal 5'-phosphate site; that span reads GR. K196 carries the N6-(pyridoxal phosphate)lysine modification. 237-238 lines the pyridoxal 5'-phosphate pocket; it reads NT.

This sequence belongs to the class-V pyridoxal-phosphate-dependent aminotransferase family. SerC subfamily. Homodimer. Pyridoxal 5'-phosphate is required as a cofactor.

It is found in the cytoplasm. The enzyme catalyses O-phospho-L-serine + 2-oxoglutarate = 3-phosphooxypyruvate + L-glutamate. It catalyses the reaction 4-(phosphooxy)-L-threonine + 2-oxoglutarate = (R)-3-hydroxy-2-oxo-4-phosphooxybutanoate + L-glutamate. Its pathway is amino-acid biosynthesis; L-serine biosynthesis; L-serine from 3-phospho-D-glycerate: step 2/3. It functions in the pathway cofactor biosynthesis; pyridoxine 5'-phosphate biosynthesis; pyridoxine 5'-phosphate from D-erythrose 4-phosphate: step 3/5. Catalyzes the reversible conversion of 3-phosphohydroxypyruvate to phosphoserine and of 3-hydroxy-2-oxo-4-phosphonooxybutanoate to phosphohydroxythreonine. This Pseudoalteromonas translucida (strain TAC 125) protein is Phosphoserine aminotransferase.